The following is a 356-amino-acid chain: 3-isopropylmalate dehydrogenase (356 aa).

The substrate site is built by R91, R101, R129, and D223. Mg(2+) is bound by residues D223, D247, and D251. NAD(+) is bound at residue 281 to 293; the sequence is GSAPDIAGKGIAN.

It belongs to the isocitrate and isopropylmalate dehydrogenases family. LeuB type 1 subfamily. As to quaternary structure, homodimer. It depends on Mg(2+) as a cofactor. Mn(2+) is required as a cofactor.

It is found in the cytoplasm. The catalysed reaction is (2R,3S)-3-isopropylmalate + NAD(+) = 4-methyl-2-oxopentanoate + CO2 + NADH. The protein operates within amino-acid biosynthesis; L-leucine biosynthesis; L-leucine from 3-methyl-2-oxobutanoate: step 3/4. In terms of biological role, catalyzes the oxidation of 3-carboxy-2-hydroxy-4-methylpentanoate (3-isopropylmalate) to 3-carboxy-4-methyl-2-oxopentanoate. The product decarboxylates to 4-methyl-2 oxopentanoate. In Ralstonia nicotianae (strain ATCC BAA-1114 / GMI1000) (Ralstonia solanacearum), this protein is 3-isopropylmalate dehydrogenase.